Reading from the N-terminus, the 381-residue chain is 1-deoxy-D-xylulose 5-phosphate reductoisomerase (381 aa).

NADPH-binding residues include G13, S14, I15, N40, and N114. K115 provides a ligand contact to 1-deoxy-D-xylulose 5-phosphate. E116 is a binding site for NADPH. D140 serves as a coordination point for Mn(2+). 1-deoxy-D-xylulose 5-phosphate-binding residues include S141, E142, S166, and H189. E142 lines the Mn(2+) pocket. G195 provides a ligand contact to NADPH. Residues S202, N207, K208, and E211 each coordinate 1-deoxy-D-xylulose 5-phosphate. E211 contributes to the Mn(2+) binding site.

This sequence belongs to the DXR family. Mg(2+) is required as a cofactor. It depends on Mn(2+) as a cofactor.

The catalysed reaction is 2-C-methyl-D-erythritol 4-phosphate + NADP(+) = 1-deoxy-D-xylulose 5-phosphate + NADPH + H(+). It participates in isoprenoid biosynthesis; isopentenyl diphosphate biosynthesis via DXP pathway; isopentenyl diphosphate from 1-deoxy-D-xylulose 5-phosphate: step 1/6. Functionally, catalyzes the NADPH-dependent rearrangement and reduction of 1-deoxy-D-xylulose-5-phosphate (DXP) to 2-C-methyl-D-erythritol 4-phosphate (MEP). This is 1-deoxy-D-xylulose 5-phosphate reductoisomerase from Treponema denticola (strain ATCC 35405 / DSM 14222 / CIP 103919 / JCM 8153 / KCTC 15104).